A 438-amino-acid chain; its full sequence is 26S proteasome regulatory subunit 6A (438 aa).

A disordered region spans residues 1-24 (MSTLEELDALDQSQQGGSSNNEGL). Residues 11–22 (DQSQQGGSSNNE) show a composition bias toward polar residues. ATP is bound at residue 226 to 233 (GPPGTGKT).

Belongs to the AAA ATPase family.

The protein resides in the cytoplasm. The protein localises to the nucleus. In terms of biological role, the 26S proteasome is involved in the ATP-dependent degradation of ubiquitinated proteins. The regulatory (or ATPase) complex confers ATP dependency and substrate specificity to the 26S complex. This chain is 26S proteasome regulatory subunit 6A (tbp1), found in Schizosaccharomyces pombe (strain 972 / ATCC 24843) (Fission yeast).